Here is a 228-residue protein sequence, read N- to C-terminus: uncharacterized protein (228 aa).

To E.coli YbfG.

This is an uncharacterized protein from Haemophilus influenzae (strain ATCC 51907 / DSM 11121 / KW20 / Rd).